Reading from the N-terminus, the 415-residue chain is MIFDKEDFESFDPELWAAIHAEEIRQQQNIELIASENIVSKAVMAAQGSVLTNKYAEGYPGKRYYGGTEAVDVVENLAIDRAKELFGAKFANVQPHSGSQANAAAYMALIQPGDTVLGMDLNAGGHLTHGASVNFSGKTYHFVPYGVNPQTELLDYEEILKIAKEVQPKLIVAGASAYSRLIDFAKFRQIADSVGAKLMVDMAHIAGLVATGAHPNPLPYADVVTTTTHKTLRGPRGGMILTNDEVLAKKINSAIFPGTQGGPLEHVIAAKAVAFKEALDPEFATYIEQVIKNTQAMADEFAKVDGLRLIAGGSDNHLLNLKVLDLGINGKEAQDLLDSVHITLNKEAIPDETLSPFKTSGVRIGAAAITSRGFKEAEARKVAQLVSKALVNHDNQEKLEEVRKSALELTHQFPL.

(6S)-5,6,7,8-tetrahydrofolate-binding positions include Leu-121 and 125–127; that span reads GHL. Lys-230 is modified (N6-(pyridoxal phosphate)lysine). 355-357 contacts (6S)-5,6,7,8-tetrahydrofolate; sequence SPF.

This sequence belongs to the SHMT family. Homodimer. The cofactor is pyridoxal 5'-phosphate.

The protein resides in the cytoplasm. It carries out the reaction (6R)-5,10-methylene-5,6,7,8-tetrahydrofolate + glycine + H2O = (6S)-5,6,7,8-tetrahydrofolate + L-serine. Its pathway is one-carbon metabolism; tetrahydrofolate interconversion. It functions in the pathway amino-acid biosynthesis; glycine biosynthesis; glycine from L-serine: step 1/1. In terms of biological role, catalyzes the reversible interconversion of serine and glycine with tetrahydrofolate (THF) serving as the one-carbon carrier. This reaction serves as the major source of one-carbon groups required for the biosynthesis of purines, thymidylate, methionine, and other important biomolecules. Also exhibits THF-independent aldolase activity toward beta-hydroxyamino acids, producing glycine and aldehydes, via a retro-aldol mechanism. The protein is Serine hydroxymethyltransferase of Lactococcus lactis subsp. cremoris (strain MG1363).